Reading from the N-terminus, the 40-residue chain is Photosystem II reaction center protein J (40 aa).

Residues 8–28 form a helical membrane-spanning segment; that stretch reads IPLWLIGTLTGILVIGLIGIF.

It belongs to the PsbJ family. As to quaternary structure, PSII is composed of 1 copy each of membrane proteins PsbA, PsbB, PsbC, PsbD, PsbE, PsbF, PsbH, PsbI, PsbJ, PsbK, PsbL, PsbM, PsbT, PsbX, PsbY, PsbZ, Psb30/Ycf12, at least 3 peripheral proteins of the oxygen-evolving complex and a large number of cofactors. It forms dimeric complexes.

It localises to the plastid. It is found in the chloroplast thylakoid membrane. Functionally, one of the components of the core complex of photosystem II (PSII). PSII is a light-driven water:plastoquinone oxidoreductase that uses light energy to abstract electrons from H(2)O, generating O(2) and a proton gradient subsequently used for ATP formation. It consists of a core antenna complex that captures photons, and an electron transfer chain that converts photonic excitation into a charge separation. The chain is Photosystem II reaction center protein J from Phalaenopsis aphrodite subsp. formosana (Moth orchid).